We begin with the raw amino-acid sequence, 366 residues long: GTP cyclohydrolase 1 type 2 homolog (366 aa).

Residues His64, His65, Asp102, His326, and Glu329 each contribute to the Zn(2+) site.

It belongs to the GTP cyclohydrolase I type 2/NIF3 family. In terms of assembly, homohexamer.

In Staphylococcus aureus (strain COL), this protein is GTP cyclohydrolase 1 type 2 homolog.